The primary structure comprises 79 residues: Sec-independent protein translocase protein TatA (79 aa).

The chain crosses the membrane as a helical span at residues 1 to 21; sequence MGSLSIWHWIVVIAVILLLFG. The span at 43-60 shows a compositional bias: basic and acidic residues; it reads MQDDEKTAEKPEPVKTID. The disordered stretch occupies residues 43–79; that stretch reads MQDDEKTAEKPEPVKTIDHNAPAPGASRSDVGSKTTV.

It belongs to the TatA/E family. As to quaternary structure, the Tat system comprises two distinct complexes: a TatABC complex, containing multiple copies of TatA, TatB and TatC subunits, and a separate TatA complex, containing only TatA subunits. Substrates initially bind to the TatABC complex, which probably triggers association of the separate TatA complex to form the active translocon.

It localises to the cell inner membrane. Functionally, part of the twin-arginine translocation (Tat) system that transports large folded proteins containing a characteristic twin-arginine motif in their signal peptide across membranes. TatA could form the protein-conducting channel of the Tat system. The polypeptide is Sec-independent protein translocase protein TatA (Nitrobacter hamburgensis (strain DSM 10229 / NCIMB 13809 / X14)).